Consider the following 429-residue polypeptide: UDP-N-acetylglucosamine 1-carboxyvinyltransferase (429 aa).

Residue 22–23 (KN) participates in phosphoenolpyruvate binding. UDP-N-acetyl-alpha-D-glucosamine is bound at residue Arg-102. The active-site Proton donor is Cys-126. Cys-126 is subject to 2-(S-cysteinyl)pyruvic acid O-phosphothioketal. Residues 131-135 (RPVDL), 171-174 (KVSV), Asp-316, and Ile-338 contribute to the UDP-N-acetyl-alpha-D-glucosamine site.

It belongs to the EPSP synthase family. MurA subfamily.

It is found in the cytoplasm. The catalysed reaction is phosphoenolpyruvate + UDP-N-acetyl-alpha-D-glucosamine = UDP-N-acetyl-3-O-(1-carboxyvinyl)-alpha-D-glucosamine + phosphate. Its pathway is cell wall biogenesis; peptidoglycan biosynthesis. Its function is as follows. Cell wall formation. Adds enolpyruvyl to UDP-N-acetylglucosamine. This is UDP-N-acetylglucosamine 1-carboxyvinyltransferase from Chelativorans sp. (strain BNC1).